A 282-amino-acid polypeptide reads, in one-letter code: 2-dehydro-3-deoxyphosphooctonate aldolase (282 aa).

Belongs to the KdsA family.

The protein resides in the cytoplasm. It carries out the reaction D-arabinose 5-phosphate + phosphoenolpyruvate + H2O = 3-deoxy-alpha-D-manno-2-octulosonate-8-phosphate + phosphate. Its pathway is carbohydrate biosynthesis; 3-deoxy-D-manno-octulosonate biosynthesis; 3-deoxy-D-manno-octulosonate from D-ribulose 5-phosphate: step 2/3. It participates in bacterial outer membrane biogenesis; lipopolysaccharide biosynthesis. This is 2-dehydro-3-deoxyphosphooctonate aldolase from Bradyrhizobium diazoefficiens (strain JCM 10833 / BCRC 13528 / IAM 13628 / NBRC 14792 / USDA 110).